A 572-amino-acid chain; its full sequence is MARILITSAIPYINGIKHLGNLVGSQLPADLYARYMRGRGHEVMFICATDEHGTPAELAAAKAGKPVEVYCAEMHEIQKEIAAGFRLSFDHFGRSSSARNHRLTQHFAGQLAENGFIEEVSERQVFSVADNRFLPDRYIEGTCPNCGYDKARGDQCENCTKQLDPTDLINPRSAISGSTDLEVRETKHLYLRQRALKDEIEAWIDSKTDWPVLTTSIAKKWLHDGEGLQDRGITRDLHWGVPVKKGDQPWPGMEGKVFYVWFDAPIEYIAGTAEWADANGKTEADWERWWRTDKGAGDVRYVQFMGKDNVPFHTLSFPATIMGSREPWKLVDYIKSFNYLNYDGGQFSTSQGRGVFMDQALSILPADYWRWWLLSHAPENSDSEFTWENFQASVNKDLADVLGNLVSRVTKFCRSKFGETVPAGGAFGEREHQLIAELQERLAAYESCMEAMEIRKAATELRALWVAGNEYLQSAAPWTVVKTDPERAQAMIRLSLNLIRLYAVISRPFIPDAAASTMASLGCDDWSWPTDVAAALERLPAGHAFTTPDVLFRKITDEERAEWQTRFAGVRT.

A 'HIGH' region motif is present at residues 11–21; the sequence is PYINGIKHLGN. The Zn(2+) site is built by Cys143, Cys146, Cys156, and Cys159. Residues 346 to 350 carry the 'KMSKS' region motif; that stretch reads QFSTS. Residue Thr349 participates in ATP binding.

Belongs to the class-I aminoacyl-tRNA synthetase family. MetG type 1 subfamily. As to quaternary structure, monomer. Requires Zn(2+) as cofactor.

It is found in the cytoplasm. The enzyme catalyses tRNA(Met) + L-methionine + ATP = L-methionyl-tRNA(Met) + AMP + diphosphate. Functionally, is required not only for elongation of protein synthesis but also for the initiation of all mRNA translation through initiator tRNA(fMet) aminoacylation. The sequence is that of Methionine--tRNA ligase from Cereibacter sphaeroides (strain ATCC 17025 / ATH 2.4.3) (Rhodobacter sphaeroides).